The following is a 354-amino-acid chain: Methylthioribose-1-phosphate isomerase (354 aa).

Residues 58-60, Arg-101, and Gln-204 contribute to the substrate site; that span reads RGA. Asp-245 functions as the Proton donor in the catalytic mechanism. A substrate-binding site is contributed by 255-256; it reads NK.

It belongs to the eIF-2B alpha/beta/delta subunits family. MtnA subfamily.

The enzyme catalyses 5-(methylsulfanyl)-alpha-D-ribose 1-phosphate = 5-(methylsulfanyl)-D-ribulose 1-phosphate. It functions in the pathway amino-acid biosynthesis; L-methionine biosynthesis via salvage pathway; L-methionine from S-methyl-5-thio-alpha-D-ribose 1-phosphate: step 1/6. Catalyzes the interconversion of methylthioribose-1-phosphate (MTR-1-P) into methylthioribulose-1-phosphate (MTRu-1-P). The protein is Methylthioribose-1-phosphate isomerase of Xylella fastidiosa (strain M12).